Reading from the N-terminus, the 57-residue chain is UPF0391 membrane protein RPA3505 (57 aa).

Helical transmembrane passes span 4–24 (WVVT…GGIA) and 30–50 (IAKI…VISI).

This sequence belongs to the UPF0391 family.

The protein localises to the cell membrane. The protein is UPF0391 membrane protein RPA3505 of Rhodopseudomonas palustris (strain ATCC BAA-98 / CGA009).